We begin with the raw amino-acid sequence, 537 residues long: Putative cysteine ligase BshC (537 aa).

The stretch at 383-451 (MERTQKLLKQ…EVKENQDNFN (69 aa)) forms a coiled coil.

This sequence belongs to the BshC family.

Involved in bacillithiol (BSH) biosynthesis. May catalyze the last step of the pathway, the addition of cysteine to glucosamine malate (GlcN-Mal) to generate BSH. The sequence is that of Putative cysteine ligase BshC from Staphylococcus haemolyticus (strain JCSC1435).